A 181-amino-acid chain; its full sequence is Transcription termination/antitermination protein NusG (181 aa).

A KOW domain is found at 130-161 (PGEMIRVNDGPFADFNGVVEEVDYEKSRLKVS).

Belongs to the NusG family. Monomer. Interacts with the transcription termination factor Rho and with RNA polymerase.

Its function is as follows. Participates in transcription elongation, termination and antitermination. In the absence of Rho, increases the rate of transcription elongation by the RNA polymerase (RNAP), probably by partially suppressing pausing. In the presence of Rho, modulates most Rho-dependent termination events by interacting with the RNAP to render the complex more susceptible to the termination activity of Rho. May be required to overcome a kinetic limitation of Rho to function at certain terminators. Also involved in ribosomal RNA transcriptional antitermination. This is Transcription termination/antitermination protein NusG from Buchnera aphidicola subsp. Acyrthosiphon pisum (strain APS) (Acyrthosiphon pisum symbiotic bacterium).